The chain runs to 514 residues: 2,3-bisphosphoglycerate-independent phosphoglycerate mutase (514 aa).

Mn(2+) contacts are provided by Asp-14 and Ser-64. The active-site Phosphoserine intermediate is Ser-64. Residues His-125, 155 to 156 (RD), Arg-187, Arg-193, 263 to 266 (RADR), and Lys-336 contribute to the substrate site. Residues Asp-403, His-407, Asp-444, His-445, and His-463 each coordinate Mn(2+).

This sequence belongs to the BPG-independent phosphoglycerate mutase family. As to quaternary structure, monomer. Mn(2+) serves as cofactor.

It catalyses the reaction (2R)-2-phosphoglycerate = (2R)-3-phosphoglycerate. Its pathway is carbohydrate degradation; glycolysis; pyruvate from D-glyceraldehyde 3-phosphate: step 3/5. In terms of biological role, catalyzes the interconversion of 2-phosphoglycerate and 3-phosphoglycerate. This is 2,3-bisphosphoglycerate-independent phosphoglycerate mutase from Shewanella denitrificans (strain OS217 / ATCC BAA-1090 / DSM 15013).